Consider the following 512-residue polypeptide: 2,3-bisphosphoglycerate-independent phosphoglycerate mutase (512 aa).

Residues Asp-12 and Ser-62 each coordinate Mn(2+). The active-site Phosphoserine intermediate is Ser-62. Substrate contacts are provided by residues His-123, 153 to 154, Arg-185, Arg-191, 260 to 263, and Lys-333; these read RD and RPDR. The Mn(2+) site is built by Asp-400, His-404, Asp-441, His-442, and His-460.

Belongs to the BPG-independent phosphoglycerate mutase family. Monomer. Mn(2+) is required as a cofactor.

It catalyses the reaction (2R)-2-phosphoglycerate = (2R)-3-phosphoglycerate. It functions in the pathway carbohydrate degradation; glycolysis; pyruvate from D-glyceraldehyde 3-phosphate: step 3/5. Its function is as follows. Catalyzes the interconversion of 2-phosphoglycerate and 3-phosphoglycerate. The chain is 2,3-bisphosphoglycerate-independent phosphoglycerate mutase from Clostridium perfringens (strain 13 / Type A).